Here is a 445-residue protein sequence, read N- to C-terminus: Meiosis-specific serine/threonine-protein kinase mek1 (445 aa).

Residues 62 to 116 (VSVGRSNTCNYQLLQFTASYKHFRVYSVLIDDDMDPLVYCEDQSSNGTFLNHRLI) form the FHA domain. One can recognise a Protein kinase domain in the interval 160-421 (NITQRLLGIG…VKQCLSHPWF (262 aa)). ATP contacts are provided by residues 166-174 (LGIGGFSRI) and K189. D281 acts as the Proton acceptor in catalysis.

It belongs to the protein kinase superfamily. CAMK Ser/Thr protein kinase family. CHEK2 subfamily.

The catalysed reaction is L-seryl-[protein] + ATP = O-phospho-L-seryl-[protein] + ADP + H(+). The enzyme catalyses L-threonyl-[protein] + ATP = O-phospho-L-threonyl-[protein] + ADP + H(+). Functionally, probable protein kinase required for meiotic recombination. The polypeptide is Meiosis-specific serine/threonine-protein kinase mek1 (mek1) (Schizosaccharomyces pombe (strain 972 / ATCC 24843) (Fission yeast)).